Reading from the N-terminus, the 264-residue chain is S-adenosylmethionine decarboxylase proenzyme (264 aa).

Residue Ser113 is the Schiff-base intermediate with substrate; via pyruvic acid of the active site. Ser113 carries the pyruvic acid (Ser); by autocatalysis modification. His118 (proton acceptor; for processing activity) is an active-site residue. Cys141 (proton donor; for catalytic activity) is an active-site residue.

The protein belongs to the prokaryotic AdoMetDC family. Type 2 subfamily. In terms of assembly, heterooctamer of four alpha and four beta chains arranged as a tetramer of alpha/beta heterodimers. It depends on pyruvate as a cofactor. Is synthesized initially as an inactive proenzyme. Formation of the active enzyme involves a self-maturation process in which the active site pyruvoyl group is generated from an internal serine residue via an autocatalytic post-translational modification. Two non-identical subunits are generated from the proenzyme in this reaction, and the pyruvate is formed at the N-terminus of the alpha chain, which is derived from the carboxyl end of the proenzyme. The post-translation cleavage follows an unusual pathway, termed non-hydrolytic serinolysis, in which the side chain hydroxyl group of the serine supplies its oxygen atom to form the C-terminus of the beta chain, while the remainder of the serine residue undergoes an oxidative deamination to produce ammonia and the pyruvoyl group blocking the N-terminus of the alpha chain.

It carries out the reaction S-adenosyl-L-methionine + H(+) = S-adenosyl 3-(methylsulfanyl)propylamine + CO2. Its pathway is amine and polyamine biosynthesis; S-adenosylmethioninamine biosynthesis; S-adenosylmethioninamine from S-adenosyl-L-methionine: step 1/1. Its function is as follows. Catalyzes the decarboxylation of S-adenosylmethionine to S-adenosylmethioninamine (dcAdoMet), the propylamine donor required for the synthesis of the polyamines spermine and spermidine from the diamine putrescine. The protein is S-adenosylmethionine decarboxylase proenzyme of Xanthomonas euvesicatoria pv. vesicatoria (strain 85-10) (Xanthomonas campestris pv. vesicatoria).